Here is a 152-residue protein sequence, read N- to C-terminus: Catabolic 3-dehydroquinase 1 (152 aa).

The Proton acceptor role is filled by tyrosine 24. Substrate-binding residues include asparagine 75, histidine 81, and aspartate 88. Histidine 101 (proton donor) is an active-site residue. Substrate-binding positions include 102 to 103 (VS) and arginine 112.

Belongs to the type-II 3-dehydroquinase family. In terms of assembly, homododecamer. Adopts a ring-like structure, composed of an arrangement of two hexameric rings stacked on top of one another.

The catalysed reaction is 3-dehydroquinate = 3-dehydroshikimate + H2O. It functions in the pathway aromatic compound metabolism; 3,4-dihydroxybenzoate biosynthesis; 3,4-dihydroxybenzoate from 3-dehydroquinate: step 1/2. Is involved in the catabolism of quinate. Allows the utilization of quinate as carbon source via the beta-ketoadipate pathway. This Aspergillus terreus (strain NIH 2624 / FGSC A1156) protein is Catabolic 3-dehydroquinase 1.